Reading from the N-terminus, the 347-residue chain is Heat-inducible transcription repressor HrcA (347 aa).

The protein belongs to the HrcA family.

In terms of biological role, negative regulator of class I heat shock genes (grpE-dnaK-dnaJ and groELS operons). Prevents heat-shock induction of these operons. The protein is Heat-inducible transcription repressor HrcA of Desulforamulus reducens (strain ATCC BAA-1160 / DSM 100696 / MI-1) (Desulfotomaculum reducens).